Here is a 623-residue protein sequence, read N- to C-terminus: Leucine aminopeptidase 2 (623 aa).

A peptide contacts are provided by residues 140 to 142 (QLE) and 266 to 271 (PYGGME). A Zn(2+)-binding site is contributed by His-295. The active-site Proton acceptor is the Glu-296. Zn(2+) is bound by residues His-299 and Glu-318. Tyr-382 acts as the Proton donor in catalysis.

The protein belongs to the peptidase M1 family. Zn(2+) is required as a cofactor.

Its subcellular location is the cytoplasm. It localises to the nucleus. It carries out the reaction an epoxide + H2O = an ethanediol. Functionally, aminopeptidase that preferentially cleaves di- and tripeptides. Also has low epoxide hydrolase activity (in vitro). Can hydrolyze the epoxide leukotriene LTA(4) but it forms preferentially 5,6-dihydroxy-7,9,11,14-eicosatetraenoic acid rather than the cytokine leukotriene B(4) as the product compared to the homologous mammalian enzyme (in vitro). The polypeptide is Leucine aminopeptidase 2 (Eremothecium gossypii (strain ATCC 10895 / CBS 109.51 / FGSC 9923 / NRRL Y-1056) (Yeast)).